A 395-amino-acid polypeptide reads, in one-letter code: uncharacterized protein (395 aa).

Residues 288–318 adopt a coiled-coil conformation; sequence VAKGKEIDNAEIEKTIKEYENIEEGIEDIVK.

This is an uncharacterized protein from Ostreid herpesvirus 1 (isolate France) (OsHV-1).